We begin with the raw amino-acid sequence, 454 residues long: Serine--tRNA ligase (454 aa).

Residue 247–249 (TAE) coordinates L-serine. ATP-binding positions include 278 to 280 (RKE) and V294. Residue E301 coordinates L-serine. Residue 365 to 368 (ELAS) coordinates ATP. Residue T400 coordinates L-serine.

The protein belongs to the class-II aminoacyl-tRNA synthetase family. Type-1 seryl-tRNA synthetase subfamily. Homodimer. The tRNA molecule binds across the dimer.

The protein resides in the cytoplasm. The catalysed reaction is tRNA(Ser) + L-serine + ATP = L-seryl-tRNA(Ser) + AMP + diphosphate + H(+). It carries out the reaction tRNA(Sec) + L-serine + ATP = L-seryl-tRNA(Sec) + AMP + diphosphate + H(+). It functions in the pathway aminoacyl-tRNA biosynthesis; selenocysteinyl-tRNA(Sec) biosynthesis; L-seryl-tRNA(Sec) from L-serine and tRNA(Sec): step 1/1. Functionally, catalyzes the attachment of serine to tRNA(Ser). Is also able to aminoacylate tRNA(Sec) with serine, to form the misacylated tRNA L-seryl-tRNA(Sec), which will be further converted into selenocysteinyl-tRNA(Sec). The chain is Serine--tRNA ligase from Pyrobaculum calidifontis (strain DSM 21063 / JCM 11548 / VA1).